The chain runs to 244 residues: 23S rRNA (guanosine-2'-O-)-methyltransferase RlmB (244 aa).

S-adenosyl-L-methionine is bound by residues Gly-196, Ile-216, and Leu-225.

It belongs to the class IV-like SAM-binding methyltransferase superfamily. RNA methyltransferase TrmH family. RlmB subfamily. As to quaternary structure, homodimer.

The protein resides in the cytoplasm. The catalysed reaction is guanosine(2251) in 23S rRNA + S-adenosyl-L-methionine = 2'-O-methylguanosine(2251) in 23S rRNA + S-adenosyl-L-homocysteine + H(+). Specifically methylates the ribose of guanosine 2251 in 23S rRNA. This is 23S rRNA (guanosine-2'-O-)-methyltransferase RlmB from Photorhabdus laumondii subsp. laumondii (strain DSM 15139 / CIP 105565 / TT01) (Photorhabdus luminescens subsp. laumondii).